A 325-amino-acid polypeptide reads, in one-letter code: Taste receptor type 2 member 7 (325 aa).

At 1 to 9 (MADKVQTTL) the chain is on the extracellular side. Residues 10-30 (LFLAVGEFSVGILGNAFIGLV) traverse the membrane as a helical segment. At 31 to 55 (NCMDWVKKRKIASIDLILTSLAISR) the chain is on the cytoplasmic side. A helical transmembrane segment spans residues 56–76 (ICLLCVILLDCFILVLYPDVY). Residues 77 to 94 (ATGKEMRIIDFFWTLTNH) lie on the Extracellular side of the membrane. A helical transmembrane segment spans residues 95–115 (LSIWFATCLSIYYFFRIANFF). The Cytoplasmic segment spans residues 116 to 128 (HPLFLWMKWRIDR). Residues 129–149 (VISWILLGCVVLSVFISLPAT) form a helical membrane-spanning segment. Residues 150-187 (ENLNADFRFCVKAKRKTNLTWSCRVNKTQHASTKLFLN) are Extracellular-facing. Residues N167 and N175 are each glycosylated (N-linked (GlcNAc...) asparagine). Residues 188-208 (LATLLPFCVCLMSFFLLILSL) traverse the membrane as a helical segment. At 209–235 (RRHIRRMQLSATGCRDPSTEAHVRALK) the chain is on the cytoplasmic side. The chain crosses the membrane as a helical span at residues 236–256 (AVISFLLLFIAYYLSFLVATS). Residues 257 to 266 (SYFMPETELA) are Extracellular-facing. A helical transmembrane segment spans residues 267–287 (VIFGESIALIYPSSHSFILIL). Over 288–319 (GNNKLRHASLKVIWKVMSILKGRKFQQHKQIG) the chain is Cytoplasmic.

It belongs to the G-protein coupled receptor T2R family.

It is found in the membrane. Functionally, gustducin-coupled receptor implicated in the perception of bitter compounds in the oral cavity and the gastrointestinal tract. Signals through PLCB2 and the calcium-regulated cation channel TRPM5. The sequence is that of Taste receptor type 2 member 7 (TAS2R7) from Pan paniscus (Pygmy chimpanzee).